Consider the following 381-residue polypeptide: Succinyl-diaminopimelate desuccinylase (381 aa).

A Zn(2+)-binding site is contributed by H68. D70 is a catalytic residue. D101 lines the Zn(2+) pocket. E135 functions as the Proton acceptor in the catalytic mechanism. 3 residues coordinate Zn(2+): E136, E164, and H350.

This sequence belongs to the peptidase M20A family. DapE subfamily. Homodimer. The cofactor is Zn(2+). Co(2+) is required as a cofactor.

The catalysed reaction is N-succinyl-(2S,6S)-2,6-diaminopimelate + H2O = (2S,6S)-2,6-diaminopimelate + succinate. It functions in the pathway amino-acid biosynthesis; L-lysine biosynthesis via DAP pathway; LL-2,6-diaminopimelate from (S)-tetrahydrodipicolinate (succinylase route): step 3/3. Catalyzes the hydrolysis of N-succinyl-L,L-diaminopimelic acid (SDAP), forming succinate and LL-2,6-diaminopimelate (DAP), an intermediate involved in the bacterial biosynthesis of lysine and meso-diaminopimelic acid, an essential component of bacterial cell walls. The protein is Succinyl-diaminopimelate desuccinylase of Neisseria meningitidis serogroup C / serotype 2a (strain ATCC 700532 / DSM 15464 / FAM18).